Here is a 396-residue protein sequence, read N- to C-terminus: Na(+)/H(+) antiporter NhaA 1 (396 aa).

Transmembrane regions (helical) follow at residues 18–38 (LLLIGAMLLAVLCANTPLSWL), 60–80 (LLLWINDGLMAIFFLLVGLEV), 95–115 (IALPGIAAVGGMLVPALIYTG), 126–146 (GWAIPAATDIAFALGVIALLG), 155–175 (LFLLTLAILDDLGAIVIIALF), 178–198 (ADLSVLSLVLAMIAVAGLFIL), 201–221 (TGVTHIAAYVLLGVFLWICVL), 262–282 (VAYGILPIFAFANAGVSLAGI), 295–315 (IAAGLFVGKQFGIVVFSWIGV), 333–353 (GMAVLCGIGFTMSLFIATLAL), and 362–382 (AARLGVLLGSLMSALSGYYLL).

This sequence belongs to the NhaA Na(+)/H(+) (TC 2.A.33) antiporter family.

The protein localises to the cell inner membrane. The enzyme catalyses Na(+)(in) + 2 H(+)(out) = Na(+)(out) + 2 H(+)(in). In terms of biological role, na(+)/H(+) antiporter that extrudes sodium in exchange for external protons. The polypeptide is Na(+)/H(+) antiporter NhaA 1 (Syntrophotalea carbinolica (strain DSM 2380 / NBRC 103641 / GraBd1) (Pelobacter carbinolicus)).